The chain runs to 183 residues: Putative manganese efflux pump MntP (183 aa).

The next 6 helical transmembrane spans lie at 6–26 (LFLIAIALSLDAFGVALCIGL), 40–60 (IYFGFFQFLFAIIGGYAGFLF), 64–84 (IATMPQIVGGVVICIVGIIMI), 101–121 (MNIILGISVSIDAMVVGFTAL), 135–155 (LFIGIVTLFVSILAFITSKYL), and 158–178 (IDVIGKYADYIGGIILIFFGL).

The protein belongs to the MntP (TC 9.B.29) family.

It is found in the cell membrane. Its function is as follows. Probably functions as a manganese efflux pump. This Clostridium tetani (strain Massachusetts / E88) protein is Putative manganese efflux pump MntP.